The chain runs to 130 residues: Ribonuclease VapC4 (130 aa).

Residues 7-130 form the PINc domain; that stretch reads LADTSVFIGI…AMPDVEVITI (124 aa). Mg(2+) is bound by residues D9 and D98.

Belongs to the PINc/VapC protein family. As to quaternary structure, interacts with cognate antitoxin VapB4. Mg(2+) serves as cofactor.

It is found in the secreted. Its function is as follows. Toxic component of a type II toxin-antitoxin (TA) system. Probably exerts its toxic effect by binding to mRNA, inhibiting translation. Binds to, recognizes and cleaves ssRNA at ACGC and AC(A/U)GC sequences, usually between the G and C; cleavage is not very efficient, nor is cleavage required to inhibit protein synthesis. Upon expression in situ, in M.smegmatis or E.coli inhibits cell growth and colony formation; in at least E.coli also causes increased levels of cellular RNA. Its toxic effect is neutralized by coexpression with cognate antitoxin VapB4. This Mycobacterium tuberculosis (strain ATCC 25618 / H37Rv) protein is Ribonuclease VapC4.